The sequence spans 89 residues: Small ribosomal subunit protein uS15 (89 aa).

Belongs to the universal ribosomal protein uS15 family. Part of the 30S ribosomal subunit. Forms a bridge to the 50S subunit in the 70S ribosome, contacting the 23S rRNA.

One of the primary rRNA binding proteins, it binds directly to 16S rRNA where it helps nucleate assembly of the platform of the 30S subunit by binding and bridging several RNA helices of the 16S rRNA. Functionally, forms an intersubunit bridge (bridge B4) with the 23S rRNA of the 50S subunit in the ribosome. The chain is Small ribosomal subunit protein uS15 from Enterobacter sp. (strain 638).